The chain runs to 264 residues: Thymidylate synthase (264 aa).

Arg-21 is a binding site for dUMP. His-51 lines the (6R)-5,10-methylene-5,6,7,8-tetrahydrofolate pocket. DUMP is bound at residue 126–127 (RR). The active-site Nucleophile is the Cys-146. DUMP contacts are provided by residues 166 to 169 (RSCD), Asn-177, and 207 to 209 (HLY). (6R)-5,10-methylene-5,6,7,8-tetrahydrofolate is bound at residue Asp-169. Ala-263 contacts (6R)-5,10-methylene-5,6,7,8-tetrahydrofolate.

The protein belongs to the thymidylate synthase family. Bacterial-type ThyA subfamily. In terms of assembly, homodimer.

Its subcellular location is the cytoplasm. The enzyme catalyses dUMP + (6R)-5,10-methylene-5,6,7,8-tetrahydrofolate = 7,8-dihydrofolate + dTMP. Its pathway is pyrimidine metabolism; dTTP biosynthesis. Functionally, catalyzes the reductive methylation of 2'-deoxyuridine-5'-monophosphate (dUMP) to 2'-deoxythymidine-5'-monophosphate (dTMP) while utilizing 5,10-methylenetetrahydrofolate (mTHF) as the methyl donor and reductant in the reaction, yielding dihydrofolate (DHF) as a by-product. This enzymatic reaction provides an intracellular de novo source of dTMP, an essential precursor for DNA biosynthesis. The polypeptide is Thymidylate synthase (Pectobacterium carotovorum subsp. carotovorum (strain PC1)).